A 252-amino-acid polypeptide reads, in one-letter code: Aliphatic sulfonates import ATP-binding protein SsuB 1 (252 aa).

The ABC transporter domain maps to 6-234 (LQLHIAGKRF…PRDRQAHEAA (229 aa)). 38-45 (GASGCGKS) is a binding site for ATP.

It belongs to the ABC transporter superfamily. Aliphatic sulfonates importer (TC 3.A.1.17.2) family. As to quaternary structure, the complex is composed of two ATP-binding proteins (SsuB), two transmembrane proteins (SsuC) and a solute-binding protein (SsuA).

The protein localises to the cell inner membrane. The enzyme catalyses ATP + H2O + aliphatic sulfonate-[sulfonate-binding protein]Side 1 = ADP + phosphate + aliphatic sulfonateSide 2 + [sulfonate-binding protein]Side 1.. Part of the ABC transporter complex SsuABC involved in aliphatic sulfonates import. Responsible for energy coupling to the transport system. The polypeptide is Aliphatic sulfonates import ATP-binding protein SsuB 1 (Xanthomonas axonopodis pv. citri (strain 306)).